Here is a 53-residue protein sequence, read N- to C-terminus: Large ribosomal subunit protein bL32c (53 aa).

This sequence belongs to the bacterial ribosomal protein bL32 family.

It is found in the plastid. Its subcellular location is the chloroplast. In Glycine max (Soybean), this protein is Large ribosomal subunit protein bL32c.